We begin with the raw amino-acid sequence, 392 residues long: Norsolorinic acid reductase B (392 aa).

NADP(+) is bound at residue Asp-75. Tyr-80 serves as the catalytic Proton donor. NADP(+)-binding positions include 184–185 (SD), Gln-210, 239–249 (GTLGQGSFQTE), and 311–319 (RKLEHIQGN). Residues 242–263 (GQGSFQTEEGRKQREKDNPGRK) form a disordered region. The segment covering 249–261 (EEGRKQREKDNPG) has biased composition (basic and acidic residues).

Belongs to the aldo/keto reductase family. Aldo/keto reductase 2 subfamily.

The protein operates within mycotoxin biosynthesis. In terms of biological role, norsolorinic acid reductase; part of the fragmented gene cluster that mediates the biosynthesis of dothistromin (DOTH), a polyketide toxin very similar in structure to the aflatoxin precursor, versicolorin B. The first step of the pathway is the conversion of acetate to norsolorinic acid (NOR) and requires the fatty acid synthase subunits hexA and hexB, as well as the polyketide synthase pksA. PksA combines a hexanoyl starter unit and 7 malonyl-CoA extender units to synthesize the precursor NOR. The hexanoyl starter unit is provided to the acyl-carrier protein (ACP) domain by the fungal fatty acid synthase hexA/hexB. The second step is the conversion of NOR to averantin (AVN) and requires the norsolorinic acid ketoreductase nor1, which catalyzes the dehydration of norsolorinic acid to form (1'S)-averantin. The cytochrome P450 monooxygenase avnA then catalyzes the hydroxylation of AVN to 5'hydroxyaverantin (HAVN). The next step is performed by adhA that transforms HAVN to averufin (AVF). Averufin might then be converted to hydroxyversicolorone by cypX and avfA. Hydroxyversicolorone is further converted versiconal hemiacetal acetate (VHA) by moxY. VHA is then the substrate for the versiconal hemiacetal acetate esterase est1 to yield versiconal (VAL). Versicolorin B synthase vbsA then converts VAL to versicolorin B (VERB) by closing the bisfuran ring. Then, the activity of the versicolorin B desaturase verB leads to versicolorin A (VERA). DotB, a predicted chloroperoxidase, may perform epoxidation of the A-ring of VERA. Alternatively, a cytochrome P450, such as cypX or avnA could catalyze this step. It is also possible that another, uncharacterized, cytochrome P450 enzyme is responsible for this step. Opening of the epoxide could potentially be achieved by the epoxide hydrolase epoA. However, epoA seems not to be required for DOTH biosynthesis, but other epoxide hydrolases may have the ability to complement this hydrolysis. Alternatively, opening of the epoxide ring could be achieved non-enzymatically. The next step is the deoxygenation of ring A to yield the 5,8-dihydroxyanthraquinone which is most likely catalyzed by the NADPH dehydrogenase encoded by ver1. The last stages of DOTH biosynthesis are proposed to involve hydroxylation of the bisfuran. OrdB and norB might have oxidative roles here. An alternative possibility is that cytochrome P450 monoogenases such as avnA and cypX might perform these steps in addition to previously proposed steps. The polypeptide is Norsolorinic acid reductase B (Dothistroma septosporum (strain NZE10 / CBS 128990) (Red band needle blight fungus)).